A 396-amino-acid polypeptide reads, in one-letter code: Lipid-A-disaccharide synthase (396 aa).

The protein belongs to the LpxB family.

It catalyses the reaction a lipid X + a UDP-2-N,3-O-bis[(3R)-3-hydroxyacyl]-alpha-D-glucosamine = a lipid A disaccharide + UDP + H(+). It functions in the pathway bacterial outer membrane biogenesis; LPS lipid A biosynthesis. Its function is as follows. Condensation of UDP-2,3-diacylglucosamine and 2,3-diacylglucosamine-1-phosphate to form lipid A disaccharide, a precursor of lipid A, a phosphorylated glycolipid that anchors the lipopolysaccharide to the outer membrane of the cell. This is Lipid-A-disaccharide synthase from Hahella chejuensis (strain KCTC 2396).